A 1308-amino-acid polypeptide reads, in one-letter code: Transposon TX1 uncharacterized 149 kDa protein (1308 aa).

In terms of domain architecture, Reverse transcriptase spans 494–765 (EAFKKGELPL…KIIKYLGVYL (272 aa)).

This is Transposon TX1 uncharacterized 149 kDa protein from Xenopus laevis (African clawed frog).